The primary structure comprises 379 residues: Alcohol dehydrogenase 2 (379 aa).

Cysteine 48 provides a ligand contact to Zn(2+). 49–53 (HTDML) lines the NAD(+) pocket. Zn(2+) is bound by residues histidine 69, cysteine 100, cysteine 103, cysteine 106, cysteine 114, and cysteine 178. NAD(+) contacts are provided by residues 203–208 (GLGAVG), aspartate 227, lysine 232, 275–277 (TGI), 298–300 (IGA), and 321–323 (TTF).

This sequence belongs to the zinc-containing alcohol dehydrogenase family. Class-IV subfamily. Homodimer. The cofactor is Zn(2+). Expressed in flowers and disk florets.

The catalysed reaction is (R,R)-chrysanthemol + NAD(+) = (1R,3R)-chrysanthemal + NADH + H(+). It catalyses the reaction nerol + NAD(+) = neral + NADH + H(+). It carries out the reaction (S)-(-)-citronellol + NAD(+) = (S)-(-)-citronellal + NADH + H(+). The enzyme catalyses perillyl alcohol + NAD(+) = perillyl aldehyde + NADH + H(+). The catalysed reaction is (6E)-8-hydroxygeraniol + NAD(+) = (6E)-8-hydroxygeranial + NADH + H(+). It catalyses the reaction (2E)-geraniol + NAD(+) = (2E)-geranial + NADH + H(+). It participates in isoprenoid biosynthesis. Its function is as follows. Component of the monoterpenoid pyrethrins biosynthesis; pyrethrins are widely used plant-derived pesticide. Mediates the conversion of trans-chrysanthemol into trans-chrysanthemal. The chain is Alcohol dehydrogenase 2 from Tanacetum cinerariifolium (Dalmatian daisy).